Reading from the N-terminus, the 589-residue chain is MTQTKGIVSAVNGNMVSVTFEGVVSLNEVGYVHVGNARLKAEIIRVRGREAQLQVFEITRGVSVGDRVEFTGDLLSVELGPGLLGQVYDGLQNPLPLLAEKVGYFLERGVYLPALSRTSEWMFTPHVSVGERVVRGDVLGYTPEGALKHRIMVPFHMGDSYEVVFIQTAGTYRVHDVIARVRDAQGHEHELTMAFRWPVKRPVHCYAERLKPTEPLVTSIRTIDTFFPVAKGGTYCIPGPFGAGKTVLQHSTSRNADVDVVVIAACGERAGEVVETLREFPDLTDPRTGRSLMERTVIVCNTSSMPVASREASVYTGVTLAEYYRQMGLDVLLLADSTSRWAQALREMSGRLEEIPGEEAFPAYLESCIAAFYERAGVVRLRSGEKGSVTIGGTVSPAGGNFEEPVTQATLKVVGAFHGLSRERSDARRYPAVHPLDSWSKYPSVLDARAVAYGRSFLRRGAEVEQMMRVVGEEGTSMEDFLVYLKGSFLDSVYLQQNSFDTVDSAVPVARQKHCYAIVMRVLGSVLAFESKDDARAYFSKLGHMFIDYNCCAWNSEAFVEKEKEIRAFLQGESTKIDSEAEGIIRGME.

239–246 (GPFGAGKT) contributes to the ATP binding site.

This sequence belongs to the ATPase alpha/beta chains family.

It catalyses the reaction ATP + H2O + 4 H(+)(in) = ADP + phosphate + 5 H(+)(out). Its function is as follows. Produces ATP from ADP in the presence of a proton gradient across the membrane. The V-type alpha chain is a catalytic subunit. The chain is V-type ATP synthase alpha chain 1 (atpA1) from Treponema pallidum (strain Nichols).